The chain runs to 491 residues: UDP-N-acetylmuramate--L-alanine ligase (491 aa).

Residue 126–132 (GTHGKTT) coordinates ATP.

Belongs to the MurCDEF family.

Its subcellular location is the cytoplasm. It carries out the reaction UDP-N-acetyl-alpha-D-muramate + L-alanine + ATP = UDP-N-acetyl-alpha-D-muramoyl-L-alanine + ADP + phosphate + H(+). The protein operates within cell wall biogenesis; peptidoglycan biosynthesis. Functionally, cell wall formation. The protein is UDP-N-acetylmuramate--L-alanine ligase of Salmonella gallinarum (strain 287/91 / NCTC 13346).